A 177-amino-acid chain; its full sequence is Large ribosomal subunit protein uL6 (177 aa).

Basic and acidic residues predominate over residues 152-171 (RPPEPYKGKGVRYDDEEVRR). The interval 152-177 (RPPEPYKGKGVRYDDEEVRRKEAKKK) is disordered.

Belongs to the universal ribosomal protein uL6 family. As to quaternary structure, part of the 50S ribosomal subunit.

In terms of biological role, this protein binds to the 23S rRNA, and is important in its secondary structure. It is located near the subunit interface in the base of the L7/L12 stalk, and near the tRNA binding site of the peptidyltransferase center. This Shewanella sp. (strain MR-4) protein is Large ribosomal subunit protein uL6.